A 498-amino-acid polypeptide reads, in one-letter code: Histone-lysine N-methyltransferase SET5 (498 aa).

A disordered region spans residues 68-94 (KPNDGCTSRSTSCPGGKKKKKSKTDTS). The SET domain maps to 108–415 (AGIRGVYFDP…PDDELVISYI (308 aa)).

It belongs to the class V-like SAM-binding methyltransferase superfamily. Histone-lysine methyltransferase family. SET5 subfamily.

Its subcellular location is the nucleus. The protein localises to the chromosome. It localises to the cytoplasm. It catalyses the reaction L-lysyl-[histone] + S-adenosyl-L-methionine = N(6)-methyl-L-lysyl-[histone] + S-adenosyl-L-homocysteine + H(+). Its function is as follows. Histone methyltransferase that monomethylates 'Lys-5', 'Lys-8' and 'Lys-12' of histone H4 (H4K5me1, H4K8me1 and H4K12me1, respectively), thereby controlling gene expression and remodeling chromatin structures. The polypeptide is Histone-lysine N-methyltransferase SET5 (SET5) (Mycosarcoma maydis (Corn smut fungus)).